The sequence spans 258 residues: Tryptophan synthase alpha chain (258 aa).

Catalysis depends on proton acceptor residues Glu52 and Asp63.

Belongs to the TrpA family. In terms of assembly, tetramer of two alpha and two beta chains.

It catalyses the reaction (1S,2R)-1-C-(indol-3-yl)glycerol 3-phosphate + L-serine = D-glyceraldehyde 3-phosphate + L-tryptophan + H2O. It functions in the pathway amino-acid biosynthesis; L-tryptophan biosynthesis; L-tryptophan from chorismate: step 5/5. In terms of biological role, the alpha subunit is responsible for the aldol cleavage of indoleglycerol phosphate to indole and glyceraldehyde 3-phosphate. This Streptococcus pneumoniae serotype 2 (strain D39 / NCTC 7466) protein is Tryptophan synthase alpha chain.